The primary structure comprises 830 residues: Septin and tuftelin-interacting protein 1 homolog (830 aa).

Acidic residues predominate over residues 1–17 (MEDDDGRESFEINDMDL). 2 disordered regions span residues 1–122 (MEDD…PKQN) and 196–244 (AYGK…KGSW). The G-patch domain occupies 153 to 199 (NSNKIMKMMQAMGYKPGEGLGAQGQGIVEPVQAQLRKGRGAVGAYGK).

The protein belongs to the TFP11/STIP family. As to quaternary structure, identified in the spliceosome C complex. Can assemble into large rod-like polymers. In terms of tissue distribution, detected in muscle cells from body, pharynx and vulva, in neurons from head and tail, in pharyngeal gland and in tail hypodermal cells.

The protein localises to the nucleus. Its function is as follows. May be involved in pre-mRNA splicing. Required for embryonic development and survival. The protein is Septin and tuftelin-interacting protein 1 homolog (stip-1) of Caenorhabditis elegans.